The sequence spans 1227 residues: DNA-directed RNA polymerase subunit beta' (1227 aa).

Residues C60, C62, C75, and C78 each coordinate Zn(2+). Mg(2+) contacts are provided by D449, D451, and D453. Zn(2+)-binding residues include C847, C921, C928, and C931.

Belongs to the RNA polymerase beta' chain family. As to quaternary structure, the RNAP catalytic core consists of 2 alpha, 1 beta, 1 beta' and 1 omega subunit. When a sigma factor is associated with the core the holoenzyme is formed, which can initiate transcription. Mg(2+) serves as cofactor. The cofactor is Zn(2+).

It catalyses the reaction RNA(n) + a ribonucleoside 5'-triphosphate = RNA(n+1) + diphosphate. Functionally, DNA-dependent RNA polymerase catalyzes the transcription of DNA into RNA using the four ribonucleoside triphosphates as substrates. The polypeptide is DNA-directed RNA polymerase subunit beta' (Lysinibacillus sphaericus (strain C3-41)).